An 89-amino-acid chain; its full sequence is Phosphoribulokinase, chloroplastic (89 aa).

Residues 1 to 22 (LTSVFGGAAEPPRGGNPDSNTL) form a disordered region.

This sequence belongs to the phosphoribulokinase family.

The protein resides in the plastid. Its subcellular location is the chloroplast. It catalyses the reaction D-ribulose 5-phosphate + ATP = D-ribulose 1,5-bisphosphate + ADP + H(+). It functions in the pathway carbohydrate biosynthesis; Calvin cycle. With respect to regulation, light regulated via thioredoxin by reversible oxidation/reduction of sulfhydryl/disulfide groups. The sequence is that of Phosphoribulokinase, chloroplastic from Vitis sp. (Grape).